The chain runs to 142 residues: Hemoglobin subunit alpha (142 aa).

Residues 2-142 (VLSPADKTNI…VSTVLTSKYR (141 aa)) enclose the Globin domain. The residue at position 4 (Ser4) is a Phosphoserine. N6-succinyllysine is present on Lys8. Residue Thr9 is modified to Phosphothreonine. Lys12 carries the N6-succinyllysine modification. Lys17 carries the N6-acetyllysine; alternate modification. An N6-succinyllysine; alternate modification is found at Lys17. Tyr25 bears the Phosphotyrosine mark. Phosphoserine is present on Ser36. Lys41 bears the N6-succinyllysine mark. Residue Ser50 is modified to Phosphoserine. His59 is an O2 binding site. Residue His88 coordinates heme b. Ser103 carries the post-translational modification Phosphoserine. Thr109 carries the post-translational modification Phosphothreonine. A Phosphoserine modification is found at Ser125. Phosphothreonine is present on residues Thr135 and Thr138. Ser139 is subject to Phosphoserine.

This sequence belongs to the globin family. As to quaternary structure, heterotetramer of two alpha chains and two beta chains. Red blood cells.

Functionally, involved in oxygen transport from the lung to the various peripheral tissues. Hemopressin acts as an antagonist peptide of the cannabinoid receptor CNR1. Hemopressin-binding efficiently blocks cannabinoid receptor CNR1 and subsequent signaling. In Canis latrans (Coyote), this protein is Hemoglobin subunit alpha (HBA).